The primary structure comprises 190 residues: Putative 3-methyladenine DNA glycosylase (190 aa).

Belongs to the DNA glycosylase MPG family.

The protein is Putative 3-methyladenine DNA glycosylase of Corynebacterium efficiens (strain DSM 44549 / YS-314 / AJ 12310 / JCM 11189 / NBRC 100395).